Reading from the N-terminus, the 254-residue chain is 5'/3'-nucleotidase SurE (254 aa).

4 residues coordinate a divalent metal cation: aspartate 9, aspartate 10, serine 40, and asparagine 93.

This sequence belongs to the SurE nucleotidase family. Requires a divalent metal cation as cofactor.

It localises to the cytoplasm. It catalyses the reaction a ribonucleoside 5'-phosphate + H2O = a ribonucleoside + phosphate. The catalysed reaction is a ribonucleoside 3'-phosphate + H2O = a ribonucleoside + phosphate. It carries out the reaction [phosphate](n) + H2O = [phosphate](n-1) + phosphate + H(+). Functionally, nucleotidase with a broad substrate specificity as it can dephosphorylate various ribo- and deoxyribonucleoside 5'-monophosphates and ribonucleoside 3'-monophosphates with highest affinity to 3'-AMP. Also hydrolyzes polyphosphate (exopolyphosphatase activity) with the preference for short-chain-length substrates (P20-25). Might be involved in the regulation of dNTP and NTP pools, and in the turnover of 3'-mononucleotides produced by numerous intracellular RNases (T1, T2, and F) during the degradation of various RNAs. The sequence is that of 5'/3'-nucleotidase SurE from Photorhabdus laumondii subsp. laumondii (strain DSM 15139 / CIP 105565 / TT01) (Photorhabdus luminescens subsp. laumondii).